A 350-amino-acid polypeptide reads, in one-letter code: Probable transposase-like protein At4g04430 (350 aa).

Disordered regions lie at residues 1–57 (MPSD…PSVN) and 307–328 (QIGQ…QVAN). The segment covering 30-43 (SGVQGSGSRSGSTV) has biased composition (low complexity).

The protein belongs to the transposase 24 family.

The polypeptide is Probable transposase-like protein At4g04430 (Arabidopsis thaliana (Mouse-ear cress)).